The chain runs to 141 residues: Large ribosomal subunit protein uL11 (141 aa).

This sequence belongs to the universal ribosomal protein uL11 family. As to quaternary structure, part of the ribosomal stalk of the 50S ribosomal subunit. Interacts with L10 and the large rRNA to form the base of the stalk. L10 forms an elongated spine to which L12 dimers bind in a sequential fashion forming a multimeric L10(L12)X complex. Post-translationally, one or more lysine residues are methylated.

Forms part of the ribosomal stalk which helps the ribosome interact with GTP-bound translation factors. The chain is Large ribosomal subunit protein uL11 from Agathobacter rectalis (strain ATCC 33656 / DSM 3377 / JCM 17463 / KCTC 5835 / VPI 0990) (Eubacterium rectale).